A 672-amino-acid polypeptide reads, in one-letter code: MEHHSHQEHENHTSHGNHEHHHHGNFKSKFFISLIFAIPIIILSPMMGVKLPFQISFTGSDWIVLILATILFFYGGKPFLSGAKDEISTKKPGMMTLVALGISVAYIYSLYAFYMNNFSGSSTHTMDFFWELATLILIMLLGHWIEMNAVGNAGNALKKMAELLPNTAVKLIDNNQREEVKISDIHIDDIVEVRAGESIPTDGIIVRGETSIDESLVTGESKKVHKTHNDDVIGGSINGSGTVQVKVTATGENGYLSQVMGLVNQAQNDKSKAELLSDKVAGYLFYFAVSIGLISFIVWMLIQNNVDFALERLVTVLVIACPHALGLAIPLVTARSTSIGAHNGLIIKNRESVEIAQHIDYIMMDKTGTLTEGNFSVNHYESFTDELNNEEILSLFASLESNSNHPLATGIVDFAKGKNISYATPQEVNNIPGVGLEGTVDNKKLKIVNVSYLDKSNFDYNKEQFTNLAQQGNSISYLIHDRQVIGIIAQGDKIKESSKQMVSDLLSRNITPVMLTGDNKEVAQTVAEELGISDVHAQLMPEDKESIIQDYQSNGSKIMMVGDGINDAPSLIRADIGMAIGAGTDVAIESGDVILVKSNPSDIINFLSLSKNTMKKMVQNLWWGAGYNVIAVPLAAGILASIGLILSPAVGAILMSLSTIIVAINAFTLKLK.

Basic and acidic residues predominate over residues 1–17; sequence MEHHSHQEHENHTSHGN. Positions 1–22 are disordered; it reads MEHHSHQEHENHTSHGNHEHHH. 6 helical membrane passes run 30 to 50, 55 to 75, 93 to 113, 125 to 145, 282 to 302, and 313 to 333; these read FFIS…MGVK, ISFT…FFYG, GMMT…LYAF, TMDF…GHWI, GYLF…WMLI, and LVTV…PLVT. Residue Asp365 is the 4-aspartylphosphate intermediate of the active site. Mg(2+) is bound by residues Asp563 and Asp567. Transmembrane regions (helical) follow at residues 621–643 and 647–669; these read LWWG…ASIG and SPAV…AFTL.

Belongs to the cation transport ATPase (P-type) (TC 3.A.3) family. Type IB subfamily.

It localises to the cell membrane. The catalysed reaction is Cu(+)(in) + ATP + H2O = Cu(+)(out) + ADP + phosphate + H(+). Functionally, involved in copper transport. This chain is Probable copper-transporting P-type ATPase B (copB), found in Staphylococcus aureus.